The sequence spans 127 residues: MRYGEKEIKEFDVENMEIWPNDAKNDYIIKITLPEFMCCCPRSGYPDFATIYLEYMPDKFVVELKAIKLYINTFMYRNVSHEASINEIYNTLKDKLKPKWIKVVGDFNPRGNVHTVIECCSDMVVPK.

Cys40 (thioimide intermediate) is an active-site residue. Asp47 serves as the catalytic Proton donor. Substrate is bound by residues 62-64 and 81-82; these read VEL and HE.

Belongs to the GTP cyclohydrolase I family. QueF type 1 subfamily.

The protein resides in the cytoplasm. It catalyses the reaction 7-aminomethyl-7-carbaguanine + 2 NADP(+) = 7-cyano-7-deazaguanine + 2 NADPH + 3 H(+). It functions in the pathway tRNA modification; tRNA-queuosine biosynthesis. Catalyzes the NADPH-dependent reduction of 7-cyano-7-deazaguanine (preQ0) to 7-aminomethyl-7-deazaguanine (preQ1). The protein is NADPH-dependent 7-cyano-7-deazaguanine reductase of Campylobacter jejuni subsp. jejuni serotype O:6 (strain 81116 / NCTC 11828).